The chain runs to 346 residues: Peroxidase 19 (346 aa).

The N-terminal stretch at 1 to 31 (MHVISLSLSSIFFFLFLTSTILISPVQPTTS) is a signal peptide. Cystine bridges form between C51-C134, C84-C89, C140-C342, and C219-C251. The active-site Proton acceptor is the H82. Residues D83, V86, G88, D90, and S92 each coordinate Ca(2+). P182 serves as a coordination point for substrate. N-linked (GlcNAc...) asparagine glycosylation occurs at N185. Heme b is bound at residue H212. Ca(2+) is bound at residue T213. Ca(2+) contacts are provided by D265, T268, and D273.

The protein belongs to the peroxidase family. Classical plant (class III) peroxidase subfamily. Requires heme b as cofactor. Ca(2+) serves as cofactor.

The protein localises to the secreted. The enzyme catalyses 2 a phenolic donor + H2O2 = 2 a phenolic radical donor + 2 H2O. Removal of H(2)O(2), oxidation of toxic reductants, biosynthesis and degradation of lignin, suberization, auxin catabolism, response to environmental stresses such as wounding, pathogen attack and oxidative stress. These functions might be dependent on each isozyme/isoform in each plant tissue. This chain is Peroxidase 19 (PER19), found in Arabidopsis thaliana (Mouse-ear cress).